The sequence spans 423 residues: Maintenance of mitochondrial morphology protein 1 (423 aa).

Topologically, residues 1–15 (MWLDDVASELSFTQG) are lumenal. Residues 16–36 (LLLGQLSIVILIGAFIKFFIF) traverse the membrane as a helical segment. Over 37–423 (GDPPSPDVSA…PGSMPGLSMA (387 aa)) the chain is Cytoplasmic. Positions 110–322 (QPESLDWFNV…EPRFQQIELP (213 aa)) constitute an SMP-LTD domain. Disordered stretches follow at residues 327–370 (RKKN…EAET) and 394–423 (SEEG…LSMA). Basic and acidic residues predominate over residues 350–367 (RSRDVERDLREEARKEVE).

The protein belongs to the MMM1 family. In terms of assembly, homodimer. Component of the ER-mitochondria encounter structure (ERMES) or MDM complex, composed of mmm1, mdm10, mdm12 and mdm34. A mmm1 homodimer associates with one molecule of mdm12 on each side in a pairwise head-to-tail manner, and the SMP-LTD domains of mmm1 and mdm12 generate a continuous hydrophobic tunnel for phospholipid trafficking.

The protein localises to the endoplasmic reticulum membrane. Component of the ERMES/MDM complex, which serves as a molecular tether to connect the endoplasmic reticulum (ER) and mitochondria. Components of this complex are involved in the control of mitochondrial shape and protein biogenesis, and function in nonvesicular lipid trafficking between the ER and mitochondria. The mdm12-mmm1 subcomplex functions in the major beta-barrel assembly pathway that is responsible for biogenesis of all outer membrane beta-barrel proteins, and acts in a late step after the SAM complex. The mdm10-mdm12-mmm1 subcomplex further acts in the TOM40-specific pathway after the action of the mdm12-mmm1 complex. Essential for establishing and maintaining the structure of mitochondria and maintenance of mtDNA nucleoids. This Sclerotinia sclerotiorum (strain ATCC 18683 / 1980 / Ss-1) (White mold) protein is Maintenance of mitochondrial morphology protein 1.